Consider the following 161-residue polypeptide: MTRKAIYPGTFDPMTNGHLDLVTRASLMFDHVILAIAASPSKKPLFTLDERVALASQVTSHLDNVEVLGFSELMAHFAAHQNANILVRGLRAVSDFEYELQLANMNRHLMPTLESVFLMPSEEWSFISSSLVKEVARHGGDIAPFLPAVVTQALFEKLAAQ.

Residue threonine 10 participates in substrate binding. ATP contacts are provided by residues 10 to 11 (TF) and histidine 18. Substrate is bound by residues lysine 42, methionine 74, and arginine 88. ATP-binding positions include 89–91 (GLR), glutamate 99, and 124–130 (WSFISSS).

The protein belongs to the bacterial CoaD family. Homohexamer. Mg(2+) serves as cofactor.

It localises to the cytoplasm. The catalysed reaction is (R)-4'-phosphopantetheine + ATP + H(+) = 3'-dephospho-CoA + diphosphate. The protein operates within cofactor biosynthesis; coenzyme A biosynthesis; CoA from (R)-pantothenate: step 4/5. Reversibly transfers an adenylyl group from ATP to 4'-phosphopantetheine, yielding dephospho-CoA (dPCoA) and pyrophosphate. The protein is Phosphopantetheine adenylyltransferase of Serratia proteamaculans (strain 568).